The chain runs to 216 residues: Urease operon 23 kDa accessory protein (216 aa).

Functionally, involved in the expression of hydrogenase activity. May be a regulatory gene affecting the expression of the hydrogenase operon or could be involved in the process of nickel incorporation into the hydrogenase apoenzyme. This is Urease operon 23 kDa accessory protein from Rhizobium meliloti (strain 1021) (Ensifer meliloti).